The sequence spans 45 residues: uncharacterized protein (45 aa).

The chain crosses the membrane as a helical span at residues 5-25; the sequence is IFFIFALSGILAACTVGGGVS.

The protein resides in the membrane. This is an uncharacterized protein from Haemophilus influenzae (strain ATCC 51907 / DSM 11121 / KW20 / Rd).